A 120-amino-acid polypeptide reads, in one-letter code: ATP-dependent Clp protease adapter protein ClpS (120 aa).

It belongs to the ClpS family. In terms of assembly, binds to the N-terminal domain of the chaperone ClpA.

Its function is as follows. Involved in the modulation of the specificity of the ClpAP-mediated ATP-dependent protein degradation. The protein is ATP-dependent Clp protease adapter protein ClpS of Azotobacter vinelandii (strain DJ / ATCC BAA-1303).